The sequence spans 734 residues: Polyribonucleotide nucleotidyltransferase (734 aa).

Mg(2+) is bound by residues Asp497 and Asp503. Positions 564 to 623 (PRIIHITIDPDKIRDVIGPGGKVIKKIVEETGAEIDIEDDGRVFIAAVDQEKGRKAQEII) constitute a KH domain. The S1 motif domain maps to 633-707 (GEIYTGRVTR…SQGRLKLSKK (75 aa)). A disordered region spans residues 700-734 (GRLKLSKKEATPPPESTAMKEGRAHRPSRRRESAR). Positions 717-734 (AMKEGRAHRPSRRRESAR) are enriched in basic and acidic residues.

The protein belongs to the polyribonucleotide nucleotidyltransferase family. The cofactor is Mg(2+).

The protein resides in the cytoplasm. It catalyses the reaction RNA(n+1) + phosphate = RNA(n) + a ribonucleoside 5'-diphosphate. Functionally, involved in mRNA degradation. Catalyzes the phosphorolysis of single-stranded polyribonucleotides processively in the 3'- to 5'-direction. In Pelotomaculum thermopropionicum (strain DSM 13744 / JCM 10971 / SI), this protein is Polyribonucleotide nucleotidyltransferase.